Consider the following 274-residue polypeptide: MQAATSRESYRIAGDRLDAYVRGAEPSAVAATADELLSVADLIRREPRLRRALADPARSGADRAALLTGILSGKVGADALDLSTTLVAGRWSAPSELLDGAERLGVAALLAAADKAGDLGEVEDELFRFGQVVAGQSALSNALSDPAAPVEQRATLAGELLTGKARPVTVRLVEVALGGFGGRSFVGALTRLVELAADRRDRQVAYVTVAAPLGEEEERRLGASLSAIYGREVSVKQSVDPEVLGGVSVRVGSDLYDGTVLRRLNETRNALAKR.

It belongs to the ATPase delta chain family. As to quaternary structure, F-type ATPases have 2 components, F(1) - the catalytic core - and F(0) - the membrane proton channel. F(1) has five subunits: alpha(3), beta(3), gamma(1), delta(1), epsilon(1). F(0) has three main subunits: a(1), b(2) and c(10-14). The alpha and beta chains form an alternating ring which encloses part of the gamma chain. F(1) is attached to F(0) by a central stalk formed by the gamma and epsilon chains, while a peripheral stalk is formed by the delta and b chains.

It is found in the cell membrane. Its function is as follows. F(1)F(0) ATP synthase produces ATP from ADP in the presence of a proton or sodium gradient. F-type ATPases consist of two structural domains, F(1) containing the extramembraneous catalytic core and F(0) containing the membrane proton channel, linked together by a central stalk and a peripheral stalk. During catalysis, ATP synthesis in the catalytic domain of F(1) is coupled via a rotary mechanism of the central stalk subunits to proton translocation. In terms of biological role, this protein is part of the stalk that links CF(0) to CF(1). It either transmits conformational changes from CF(0) to CF(1) or is implicated in proton conduction. This is ATP synthase subunit delta from Salinispora arenicola (strain CNS-205).